A 254-amino-acid chain; its full sequence is Countin-2 (254 aa).

An N-terminal signal peptide occupies residues M1 to A19. Residues Q22–Q107 form the Saposin B-type domain. 3 disulfides stabilise this stretch: C26-C103, C29-C97, and C56-C68. N-linked (GlcNAc...) asparagine glycosylation is found at N110 and N219. The interval Q231–Y254 is disordered. Residues T233–S245 show a composition bias toward gly residues.

The protein belongs to the countin family.

Its subcellular location is the secreted. Cell-counting factor that limits the minimum size of the multicellular structure. May up-regulate the expression of both gp24 and gp80, which mediate cell adhesion. The protein is Countin-2 (ctnB) of Dictyostelium discoideum (Social amoeba).